The sequence spans 355 residues: Cobalt-precorrin-5B C(1)-methyltransferase (355 aa).

It belongs to the CbiD family.

It carries out the reaction Co-precorrin-5B + S-adenosyl-L-methionine = Co-precorrin-6A + S-adenosyl-L-homocysteine. The protein operates within cofactor biosynthesis; adenosylcobalamin biosynthesis; cob(II)yrinate a,c-diamide from sirohydrochlorin (anaerobic route): step 6/10. Catalyzes the methylation of C-1 in cobalt-precorrin-5B to form cobalt-precorrin-6A. The sequence is that of Cobalt-precorrin-5B C(1)-methyltransferase from Sulfolobus acidocaldarius (strain ATCC 33909 / DSM 639 / JCM 8929 / NBRC 15157 / NCIMB 11770).